The primary structure comprises 646 residues: Peptidylprolyl isomerase domain and WD repeat-containing protein 1 (646 aa).

The tract at residues 1 to 50 is disordered; sequence MATESGSDSQLRRRRRRDPEGSEKTELSEREPALAVAGSEENDDENEERW. N-acetylalanine is present on alanine 2. Basic and acidic residues predominate over residues 17 to 32; it reads RDPEGSEKTELSEREP. WD repeat units lie at residues 88 to 126, 131 to 170, 221 to 260, and 278 to 319; these read MHRD…IEFV, SHLG…MINM, LHVS…YKFP, and KCKA…RVFD. Residues 490 to 645 enclose the PPIase cyclophilin-type domain; sequence VSDSAIVHTS…EDVSIINITV (156 aa).

It belongs to the cyclophilin-type PPIase family. PPIL1 subfamily. Identified in the spliceosome C complex.

The protein resides in the nucleus. It catalyses the reaction [protein]-peptidylproline (omega=180) = [protein]-peptidylproline (omega=0). Inhibited by cyclosporin A (CsA). In terms of biological role, PPIase that catalyzes the cis-trans isomerization of proline imidic peptide bonds in oligopeptides and may therefore assist protein folding. May be involved in pre-mRNA splicing. The chain is Peptidylprolyl isomerase domain and WD repeat-containing protein 1 from Mus musculus (Mouse).